The sequence spans 218 residues: Small ribosomal subunit protein uS3 (218 aa).

The KH type-2 domain occupies 40-109 (IRKIINTEYS…DVSINIREVK (70 aa)).

It belongs to the universal ribosomal protein uS3 family. In terms of assembly, part of the 30S ribosomal subunit. Forms a tight complex with proteins S10 and S14.

Functionally, binds the lower part of the 30S subunit head. Binds mRNA in the 70S ribosome, positioning it for translation. The sequence is that of Small ribosomal subunit protein uS3 from Orientia tsutsugamushi (strain Boryong) (Rickettsia tsutsugamushi).